We begin with the raw amino-acid sequence, 349 residues long: Alpha-centractin (349 aa).

At M1 the chain carries N-acetylmethionine.

Belongs to the actin family. ARP1 subfamily. Part of the ACTR1A/ACTB filament around which the dynactin complex is built. The filament contains 8 copies of ACTR1A and 1 ACTB. Interacts with dynein and adapters such as BICD2. Interacts with BCCIP (isoform 2/alpha).

The protein localises to the cytoplasm. The protein resides in the cytoskeleton. It is found in the microtubule organizing center. It localises to the centrosome. Its subcellular location is the cell cortex. Its function is as follows. Part of the ACTR1A/ACTB filament around which the dynactin complex is built. The dynactin multiprotein complex activates the molecular motor dynein for ultra-processive transport along microtubules. The chain is Alpha-centractin (ACTR1A) from Sus scrofa (Pig).